Here is a 466-residue protein sequence, read N- to C-terminus: SVGFKAGVKDYKLTYYTPDYETKDTDILAAFRVTPQPGVPPEEAGAAVAVESSTGTWTTVWTDGLTSLDRYKGRCYHIEPVAGEETQFIAYVAYPLDLFEEGSVXNMFTSIVGNVFGFKALRALRLEDLRIPVAYVKTFQGPPHAIQVERDKLNKYGRPLLGCTIKPKLGLSAKNYGRAVYECLRGGLDFTKDDENVNSQPFMRWRDRFLFCAEAIYKAQAETGEIKGHYLNATAGTCEEMIKRAVFARELGVPIVMHDYLTGGFTANTSLAHYCRDNGLLLHIHRAMHAVIDRQKNHGIHFRVLAKALRMSGGDHIHSGTVVGKLEGEREITLGFVDLLRDDFIEKDRSRGIYFTQDWVSLPGVLPVASGGIHVWHMPALTEIFGDDSVLQFGGGTLGHPWXKAPGAVAXRVALEACVQARNEGRDLAREGNEIIREASKWSPELAAACEVWKEIKFEFEAMDTL.

K5 is modified (N6,N6,N6-trimethyllysine). Substrate-binding residues include N114 and T164. Catalysis depends on K166, which acts as the Proton acceptor. Position 168 (K168) interacts with substrate. Mg(2+)-binding residues include K192, D194, and E195. K192 is subject to N6-carboxylysine. H285 serves as the catalytic Proton acceptor. Substrate contacts are provided by R286, H318, and S370.

Belongs to the RuBisCO large chain family. Type I subfamily. In terms of assembly, heterohexadecamer of 8 large chains and 8 small chains; disulfide-linked. The disulfide link is formed within the large subunit homodimers. Requires Mg(2+) as cofactor. Post-translationally, the disulfide bond which can form in the large chain dimeric partners within the hexadecamer appears to be associated with oxidative stress and protein turnover.

It is found in the plastid. Its subcellular location is the chloroplast. The catalysed reaction is 2 (2R)-3-phosphoglycerate + 2 H(+) = D-ribulose 1,5-bisphosphate + CO2 + H2O. It carries out the reaction D-ribulose 1,5-bisphosphate + O2 = 2-phosphoglycolate + (2R)-3-phosphoglycerate + 2 H(+). Its function is as follows. RuBisCO catalyzes two reactions: the carboxylation of D-ribulose 1,5-bisphosphate, the primary event in carbon dioxide fixation, as well as the oxidative fragmentation of the pentose substrate in the photorespiration process. Both reactions occur simultaneously and in competition at the same active site. This Cercidiphyllum japonicum (Katsura tree) protein is Ribulose bisphosphate carboxylase large chain.